Here is a 263-residue protein sequence, read N- to C-terminus: Ribosome maturation factor RimP (263 aa).

The tract at residues Glu192 to Glu263 is disordered. Positions Pro217–Ala231 are enriched in basic residues. Basic and acidic residues predominate over residues Lys232–Ile257.

The protein belongs to the RimP family.

It localises to the cytoplasm. In terms of biological role, required for maturation of 30S ribosomal subunits. This Nitrobacter hamburgensis (strain DSM 10229 / NCIMB 13809 / X14) protein is Ribosome maturation factor RimP.